Reading from the N-terminus, the 284-residue chain is D-tagatose-1,6-bisphosphate aldolase subunit GatY (284 aa).

Asp82 (proton donor) is an active-site residue. Residues His83 and His180 each coordinate Zn(2+). Residue Gly181 coordinates dihydroxyacetone phosphate. His208 contacts Zn(2+). Dihydroxyacetone phosphate is bound by residues 209 to 211 (GAS) and 230 to 233 (NVAT).

Belongs to the class II fructose-bisphosphate aldolase family. TagBP aldolase GatY subfamily. Forms a complex with GatZ. It depends on Zn(2+) as a cofactor.

It catalyses the reaction D-tagatofuranose 1,6-bisphosphate = D-glyceraldehyde 3-phosphate + dihydroxyacetone phosphate. Its pathway is carbohydrate metabolism; D-tagatose 6-phosphate degradation; D-glyceraldehyde 3-phosphate and glycerone phosphate from D-tagatose 6-phosphate: step 2/2. Functionally, catalytic subunit of the tagatose-1,6-bisphosphate aldolase GatYZ, which catalyzes the reversible aldol condensation of dihydroxyacetone phosphate (DHAP or glycerone-phosphate) with glyceraldehyde 3-phosphate (G3P) to produce tagatose 1,6-bisphosphate (TBP). Requires GatZ subunit for full activity and stability. Is involved in the catabolism of galactitol. The sequence is that of D-tagatose-1,6-bisphosphate aldolase subunit GatY from Klebsiella pneumoniae subsp. pneumoniae (strain ATCC 700721 / MGH 78578).